The sequence spans 158 residues: Phosphopantetheine adenylyltransferase (158 aa).

T10 lines the substrate pocket. ATP is bound by residues 10–11 (TF) and H18. Substrate contacts are provided by K42, L74, and R88. Residues 89 to 91 (GIR), E99, and 124 to 130 (WRYLSST) contribute to the ATP site.

The protein belongs to the bacterial CoaD family. As to quaternary structure, homohexamer. Requires Mg(2+) as cofactor.

It localises to the cytoplasm. The catalysed reaction is (R)-4'-phosphopantetheine + ATP + H(+) = 3'-dephospho-CoA + diphosphate. It functions in the pathway cofactor biosynthesis; coenzyme A biosynthesis; CoA from (R)-pantothenate: step 4/5. Reversibly transfers an adenylyl group from ATP to 4'-phosphopantetheine, yielding dephospho-CoA (dPCoA) and pyrophosphate. The chain is Phosphopantetheine adenylyltransferase from Actinobacillus pleuropneumoniae serotype 5b (strain L20).